Consider the following 156-residue polypeptide: Small ribosomal subunit protein uS7 (156 aa).

This sequence belongs to the universal ribosomal protein uS7 family. In terms of assembly, part of the 30S ribosomal subunit. Contacts proteins S9 and S11.

In terms of biological role, one of the primary rRNA binding proteins, it binds directly to 16S rRNA where it nucleates assembly of the head domain of the 30S subunit. Is located at the subunit interface close to the decoding center, probably blocks exit of the E-site tRNA. The polypeptide is Small ribosomal subunit protein uS7 (Macrococcus caseolyticus (strain JCSC5402) (Macrococcoides caseolyticum)).